A 208-amino-acid polypeptide reads, in one-letter code: ATP synthase subunit b 1 (208 aa).

The span at 1–18 (MFVSTAFAQTATESQPAS) shows a compositional bias: polar residues. The disordered stretch occupies residues 1-26 (MFVSTAFAQTATESQPASTAGEHGAA). The chain crosses the membrane as a helical span at residues 56 to 78 (SQVLWLAITFGLFYLFLSRVVLP).

It belongs to the ATPase B chain family. F-type ATPases have 2 components, F(1) - the catalytic core - and F(0) - the membrane proton channel. F(1) has five subunits: alpha(3), beta(3), gamma(1), delta(1), epsilon(1). F(0) has three main subunits: a(1), b(2) and c(10-14). The alpha and beta chains form an alternating ring which encloses part of the gamma chain. F(1) is attached to F(0) by a central stalk formed by the gamma and epsilon chains, while a peripheral stalk is formed by the delta and b chains.

It is found in the cell inner membrane. In terms of biological role, f(1)F(0) ATP synthase produces ATP from ADP in the presence of a proton or sodium gradient. F-type ATPases consist of two structural domains, F(1) containing the extramembraneous catalytic core and F(0) containing the membrane proton channel, linked together by a central stalk and a peripheral stalk. During catalysis, ATP synthesis in the catalytic domain of F(1) is coupled via a rotary mechanism of the central stalk subunits to proton translocation. Its function is as follows. Component of the F(0) channel, it forms part of the peripheral stalk, linking F(1) to F(0). The protein is ATP synthase subunit b 1 of Brucella abortus (strain 2308).